A 133-amino-acid polypeptide reads, in one-letter code: MTLNLSVLTPNRIVWDSEVEEIVLSTNSGQIGILPNHAPIATAVDIGILRIRLNDQWLTMALMGGFARIGNNEITVLVNDAEKGSDIDPQEAQQTLELAEANVKKAEGRRQKIEANLALRRARTRVEAINPIS.

The protein belongs to the ATPase epsilon chain family. As to quaternary structure, F-type ATPases have 2 components, CF(1) - the catalytic core - and CF(0) - the membrane proton channel. CF(1) has five subunits: alpha(3), beta(3), gamma(1), delta(1), epsilon(1). CF(0) has three main subunits: a, b and c.

Its subcellular location is the plastid. It is found in the chloroplast thylakoid membrane. In terms of biological role, produces ATP from ADP in the presence of a proton gradient across the membrane. The sequence is that of ATP synthase epsilon chain, chloroplastic from Nicotiana sylvestris (Wood tobacco).